Reading from the N-terminus, the 360-residue chain is DAZ-associated protein 1 (360 aa).

RRM domains lie at G10–P97 and N114–P191. Disordered regions lie at residues H73 to I116 and V184 to F345. 2 stretches are compositionally biased toward basic and acidic residues: residues Q91–R112 and V184–K195. Polar residues predominate over residues G203–S231. Residues T242–G253 are compositionally biased toward gly residues. The span at G271–D301 shows a compositional bias: pro residues. The segment covering Q328 to F345 has biased composition (polar residues).

As to quaternary structure, component of a mRNP complex, at least composed of DAZAP1, IGF2BP3-A, STAU and VgRBP60. Binds to the 3'-UTR of Vg1 mRNA. Interacts with profilin, a protein involved in actin assembly. Interacts with VgRBP71. In terms of tissue distribution, expressed in oocytes.

It is found in the cytoplasm. Its function is as follows. RNA-binding protein, which is required during gametogenesis. May be involved in the actin-dependent anchoring of Vg1 mRNA in the vegetal cortex of the oocyte. The chain is DAZ-associated protein 1 (dazap1) from Xenopus laevis (African clawed frog).